We begin with the raw amino-acid sequence, 447 residues long: GTPase Der (447 aa).

EngA-type G domains lie at 4 to 165 and 180 to 357; these read QIIT…PEEE and LQIV…KIWN. GTP-binding positions include 10–17, 57–61, 119–122, 186–193, 233–237, and 298–301; these read GRPNVGKS, DTPGL, NKCE, GRPNAGKS, DTAGL, and NKWD. The KH-like domain maps to 358–443; the sequence is KKITTSKLNE…PIRFTYVKTK (86 aa).

Belongs to the TRAFAC class TrmE-Era-EngA-EngB-Septin-like GTPase superfamily. EngA (Der) GTPase family. In terms of assembly, associates with the 50S ribosomal subunit.

In terms of biological role, GTPase that plays an essential role in the late steps of ribosome biogenesis. The protein is GTPase Der of Rickettsia rickettsii (strain Iowa).